Here is a 544-residue protein sequence, read N- to C-terminus: Protein anon-37Cs (544 aa).

The protein localises to the cytoplasm. In terms of biological role, has a non-vital function. The protein is Protein anon-37Cs (anon-37Cs) of Drosophila lebanonensis (Fruit fly).